A 68-amino-acid polypeptide reads, in one-letter code: Large ribosomal subunit protein uL29 (68 aa).

Belongs to the universal ribosomal protein uL29 family.

This is Large ribosomal subunit protein uL29 from Chloroflexus aggregans (strain MD-66 / DSM 9485).